The following is a 328-amino-acid chain: Renalase (328 aa).

Residues alanine 13, 32–33, arginine 40, and 56–57 each bind FAD; these read DK and QY. Substrate-binding positions include 57–61 and 96–98; these read YFTAR and SPD. Isoleucine 128 is an FAD binding site. Position 185 (threonine 185) interacts with substrate. Residue aspartate 302 participates in FAD binding. A substrate-binding site is contributed by arginine 308. Valine 309 contacts FAD.

This sequence belongs to the bacterial renalase family. The cofactor is FAD.

It carries out the reaction 1,2-dihydro-beta-NAD + O2 + H(+) = H2O2 + NAD(+). It catalyses the reaction 1,2-dihydro-beta-NADP + O2 + H(+) = H2O2 + NADP(+). The catalysed reaction is 1,6-dihydro-beta-NADP + O2 + H(+) = H2O2 + NADP(+). The enzyme catalyses 1,6-dihydro-beta-NAD + O2 + H(+) = H2O2 + NAD(+). In terms of biological role, catalyzes the oxidation of the 1,2-dihydro- and 1,6-dihydro- isomeric forms of beta-NAD(P) back to beta-NAD(P)+. Has a preference for 1,2-dihydro-beta-NAD as substrate. May serve to protect primary metabolism dehydrogenases from inhibition by the 1,2-dihydro- and 1,6-dihydro-beta-NAD(P) isomers. The chain is Renalase from Pseudomonas savastanoi pv. phaseolicola (strain 1448A / Race 6) (Pseudomonas syringae pv. phaseolicola (strain 1448A / Race 6)).